The chain runs to 382 residues: Apolipoprotein A-IV (382 aa).

The first 20 residues, 1–20 (MFLKAVVLSLALVAVTGARA), serve as a signal peptide directing secretion. A run of 13 repeats spans residues 33–54 (DYFSQLGSNAKKAVEHLQKSEL), 60–81 (TLFQDKLGEVNTYTEDLQKKLV), 82–103 (PFATELHERLTKDSEKLKEEIR), 115–136 (PHATEVSQKIGDNVRELQQRLG), 137–158 (PFTGGLRTQVNTQVQQLQRQLK), 159–180 (PYAERMESVLRQNIRNLEASVA), 181–202 (PYADEFKAKIDQNVEELKGSLT), 203–224 (PYAEELKAKIDQNVEELRRSLA), 225–246 (PYAQDVQEKLNHQLEGLAFQMK), 247–268 (KQAEELKAKISANADELRQKLV), 269–286 (PVAENVHGHLKGNTEGLQ), 287–308 (KSLLELRSHLDQQVEEFRLKVE), and 309–330 (PYGETFNKALVQQVEDLRQKLG). The 13 X 22 AA approximate tandem repeats stretch occupies residues 33 to 330 (DYFSQLGSNA…QVEDLRQKLG (298 aa)). The segment at 361-382 (EASQGQSQALPAQEKAQAPLEG) is disordered.

The protein belongs to the apolipoprotein A1/A4/E family. In terms of assembly, homodimer. In terms of tissue distribution, secreted in plasma.

The protein resides in the secreted. May have a role in chylomicrons and VLDL secretion and catabolism. Required for efficient activation of lipoprotein lipase by ApoC-II; potent activator of LCAT. Apoa-IV is a major component of HDL and chylomicrons. This is Apolipoprotein A-IV (APOA4) from Sus scrofa (Pig).